The sequence spans 66 residues: Large ribosomal subunit protein bL35 (66 aa).

The tract at residues 1-42 (MPKQKTHRASAKRFKRTANGGLKRHHAYTGHRFHGKTKKQRR) is disordered.

Belongs to the bacterial ribosomal protein bL35 family.

The protein is Large ribosomal subunit protein bL35 of Lactobacillus gasseri (strain ATCC 33323 / DSM 20243 / BCRC 14619 / CIP 102991 / JCM 1131 / KCTC 3163 / NCIMB 11718 / NCTC 13722 / AM63).